A 77-amino-acid polypeptide reads, in one-letter code: Small ribosomal subunit protein uS17 (77 aa).

The protein belongs to the universal ribosomal protein uS17 family. As to quaternary structure, part of the 30S ribosomal subunit.

Functionally, one of the primary rRNA binding proteins, it binds specifically to the 5'-end of 16S ribosomal RNA. This chain is Small ribosomal subunit protein uS17, found in Rickettsia bellii (strain OSU 85-389).